Consider the following 562-residue polypeptide: TBC1 domain family member 24 (562 aa).

A 1,2-diacyl-sn-glycero-3-phospho-(1D-myo-inositol) contacts are provided by residues lysine 36, arginine 40, lysine 238, arginine 242, and arginine 293–arginine 297. The 218-residue stretch at glycine 42 to proline 259 folds into the Rab-GAP TBC domain. Residues glutamate 337–lysine 549 form the TLDc domain. Positions asparagine 450–serine 471 are disordered. Positions alanine 454–isoleucine 468 are enriched in basic and acidic residues.

As to quaternary structure, interacts with ARF6.

The protein localises to the cell membrane. It localises to the cytoplasm. Its subcellular location is the cytoplasmic vesicle membrane. The protein resides in the presynapse. May act as a GTPase-activating protein for Rab family protein(s). Involved in neuronal projections development, probably through a negative modulation of ARF6 function. Involved in the regulation of synaptic vesicle trafficking. This chain is TBC1 domain family member 24 (tbc1d24), found in Xenopus laevis (African clawed frog).